The chain runs to 417 residues: Glutamyl-tRNA(Gln) amidotransferase subunit D (417 aa).

The 328-residue stretch at Glu73–Pro400 folds into the Asparaginase/glutaminase domain. Catalysis depends on residues Thr83, Thr157, Asp158, and Lys236.

Belongs to the asparaginase 1 family. GatD subfamily. Heterodimer of GatD and GatE.

The catalysed reaction is L-glutamyl-tRNA(Gln) + L-glutamine + ATP + H2O = L-glutaminyl-tRNA(Gln) + L-glutamate + ADP + phosphate + H(+). Its function is as follows. Allows the formation of correctly charged Gln-tRNA(Gln) through the transamidation of misacylated Glu-tRNA(Gln) in organisms which lack glutaminyl-tRNA synthetase. The reaction takes place in the presence of glutamine and ATP through an activated gamma-phospho-Glu-tRNA(Gln). The GatDE system is specific for glutamate and does not act on aspartate. The protein is Glutamyl-tRNA(Gln) amidotransferase subunit D of Pyrobaculum aerophilum (strain ATCC 51768 / DSM 7523 / JCM 9630 / CIP 104966 / NBRC 100827 / IM2).